The following is a 225-amino-acid chain: Small ribosomal subunit protein uS3 (225 aa).

In terms of domain architecture, KH type-2 spans 38 to 106; it reads LRAFLRRKLS…DVALNIVEIR (69 aa).

It belongs to the universal ribosomal protein uS3 family. In terms of assembly, part of the 30S ribosomal subunit. Forms a tight complex with proteins S10 and S14.

Its function is as follows. Binds the lower part of the 30S subunit head. Binds mRNA in the 70S ribosome, positioning it for translation. This chain is Small ribosomal subunit protein uS3, found in Gluconobacter oxydans (strain 621H) (Gluconobacter suboxydans).